Here is an 82-residue protein sequence, read N- to C-terminus: DinI-like protein (82 aa).

Belongs to the DinI family.

The polypeptide is DinI-like protein (Enterobacteria phage VT1-Sakai).